A 74-amino-acid polypeptide reads, in one-letter code: UPF0235 protein tsr1994 (74 aa).

Belongs to the UPF0235 family.

The sequence is that of UPF0235 protein tsr1994 from Thermosynechococcus vestitus (strain NIES-2133 / IAM M-273 / BP-1).